Reading from the N-terminus, the 322-residue chain is UV DNA damage endonuclease (322 aa).

The protein belongs to the uve1/UvsE family.

Component in a DNA repair pathway. Removal of UV LIGHT damaged nucleotides. Recognizes pyrimidine dimers and cleave a phosphodiester bond immediately 5' to the lesion. This Halalkalibacterium halodurans (strain ATCC BAA-125 / DSM 18197 / FERM 7344 / JCM 9153 / C-125) (Bacillus halodurans) protein is UV DNA damage endonuclease.